A 41-amino-acid chain; its full sequence is Large ribosomal subunit protein bL36 (41 aa).

It belongs to the bacterial ribosomal protein bL36 family.

The polypeptide is Large ribosomal subunit protein bL36 (Sphingopyxis alaskensis (strain DSM 13593 / LMG 18877 / RB2256) (Sphingomonas alaskensis)).